Reading from the N-terminus, the 291-residue chain is Kidney mitochondrial carrier protein 1 (291 aa).

3 Solcar repeats span residues 7–96 (KPFI…LKRL), 104–189 (ETLV…TKKH), and 198–289 (DTVY…LKKL). The next 6 helical transmembrane spans lie at 9–26 (FIYG…TFPI), 71–89 (GIAP…KIGT), 106–124 (LVLN…SCIA), 164–183 (GVSL…LPVY), 204–224 (FLSS…VDVV), and 264–283 (GFWP…FITY).

The protein belongs to the mitochondrial carrier (TC 2.A.29) family.

It localises to the mitochondrion inner membrane. It carries out the reaction sulfite(in) + sulfate(out) = sulfite(out) + sulfate(in). The enzyme catalyses thiosulfate(in) + sulfate(out) = thiosulfate(out) + sulfate(in). It catalyses the reaction sulfate(out) + phosphate(in) = sulfate(in) + phosphate(out). The catalysed reaction is oxalate(in) + sulfate(out) = oxalate(out) + sulfate(in). It carries out the reaction malonate(in) + sulfate(out) = malonate(out) + sulfate(in). The enzyme catalyses maleate(in) + sulfate(out) = maleate(out) + sulfate(in). It catalyses the reaction (S)-malate(in) + sulfate(out) = (S)-malate(out) + sulfate(in). The catalysed reaction is (3S)-citramalate(in) + sulfate(out) = (3S)-citramalate(out) + sulfate(in). It carries out the reaction (3R)-citramalate(in) + sulfate(out) = (3R)-citramalate(out) + sulfate(in). The enzyme catalyses sulfate(out) + succinate(in) = sulfate(in) + succinate(out). It catalyses the reaction (S,S)-tartrate(in) + sulfate(out) = (S,S)-tartrate(out) + sulfate(in). The catalysed reaction is (2R,3R)-tartrate(in) + sulfate(out) = (2R,3R)-tartrate(out) + sulfate(in). It carries out the reaction D-aspartate(in) + sulfate(out) = D-aspartate(out) + sulfate(in). The enzyme catalyses L-aspartate(in) + sulfate(out) = L-aspartate(out) + sulfate(in). It catalyses the reaction sulfate(in) = sulfate(out). The catalysed reaction is phosphate(in) = phosphate(out). It carries out the reaction (S)-malate(out) = (S)-malate(in). Probable transporter. Its function is as follows. Antiporter that transports inorganic anions (sulfate, sulfite, thiosulfate and phosphate) and, to a lesser extent, a variety of dicarboxylates (e.g. malonate, malate and citramalate) and, even more so, aspartate. The sulfate/sulfate exchange is much higher than the phosphate/phosphate and malate/malate exchanges. The transport affinities is higher for sulfate and thiosulfate than for any other substrate. May catalyze the export of sulfite and thiosulfate (the hydrogen sulfide degradation products) from the mitochondria, thereby modulating the level of the hydrogen sulfide. Also may mediate a very low unidirectional transport of sulfate, phosphate and (S)-malate. This is Kidney mitochondrial carrier protein 1 from Xenopus laevis (African clawed frog).